A 242-amino-acid polypeptide reads, in one-letter code: Outer membrane protein class 4 (242 aa).

The first 22 residues, 1 to 22 (MTKQLKLSALFVALLASGTAVA), serve as a signal peptide directing secretion. 7 tandem repeats follow at residues 69–70 (AP), 71–72 (EP), 73–74 (EP), 75–76 (EP), 77–78 (EP), 79–80 (AP), and 81–82 (AP). Residues 69 to 82 (APEPEPEPEPAPAP) form a 7 X 2 AA tandem repeats of X-P region. The OmpA-like domain occupies 92-229 (YVDETISLSA…RVDVKIRSIV (138 aa)). Cys191 and Cys214 are oxidised to a cystine.

This sequence belongs to the outer membrane OOP (TC 1.B.6) superfamily. The C-terminus exists in a monomer-dimer equilibrium.

The protein localises to the cell outer membrane. This is Outer membrane protein class 4 from Neisseria meningitidis serogroup B (strain ATCC BAA-335 / MC58).